Reading from the N-terminus, the 60-residue chain is Potassium channel toxin alpha-KTx 29.3 (60 aa).

The first 28 residues, 1-28 (MKSVCGVLIILVVLTTMLSISTFSTVGA), serve as a signal peptide directing secretion. Cystine bridges form between C32–C51, C40–C56, and C44–C58.

The protein belongs to the short scorpion toxin superfamily. Potassium channel inhibitor family. Alpha-KTx 29 subfamily. In terms of tissue distribution, expressed by the venom gland.

It localises to the secreted. Weakly inhibits the Kv1.3/KCNA3 channel (1 uM of thetoxin inhibits currents by 13.2%) and Kv7.1/KCNQ1 channel (10 uM of the toxin inhibits currents by 27.7%). The polypeptide is Potassium channel toxin alpha-KTx 29.3 (Lychas mucronatus (Chinese swimming scorpion)).